Reading from the N-terminus, the 269-residue chain is Phosphate import ATP-binding protein PstB 2 (269 aa).

Residues 23–264 (LEVKDLSIYY…PKKQKTEDYI (242 aa)) enclose the ABC transporter domain. 55–62 (GPSGCGKS) contacts ATP.

Belongs to the ABC transporter superfamily. Phosphate importer (TC 3.A.1.7) family. As to quaternary structure, the complex is composed of two ATP-binding proteins (PstB), two transmembrane proteins (PstC and PstA) and a solute-binding protein (PstS).

The protein localises to the cell membrane. The catalysed reaction is phosphate(out) + ATP + H2O = ADP + 2 phosphate(in) + H(+). Functionally, part of the ABC transporter complex PstSACB involved in phosphate import. Responsible for energy coupling to the transport system. The chain is Phosphate import ATP-binding protein PstB 2 from Bacillus subtilis (strain 168).